The chain runs to 381 residues: Arrestin-C (381 aa).

This sequence belongs to the arrestin family. In terms of assembly, homodimer; disulfide-linked in response to retinal illumination. Interacts with CXCR4; the interaction is dependent on the C-terminal phosphorylation of CXCR4 and modulates the calcium ion mobilization activity of CXCR4. Interacts with GPR84. Inner and outer segments, and the inner plexiform regions of the retina.

The protein resides in the photoreceptor inner segment. It localises to the cell projection. Its subcellular location is the cilium. The protein localises to the photoreceptor outer segment. Its function is as follows. May play a role in an as yet undefined retina-specific signal transduction. Could bind to photoactivated-phosphorylated red/green opsins. The chain is Arrestin-C (Arr3) from Mus musculus (Mouse).